The chain runs to 382 residues: Intermediate transcription factor 3 large subunit (382 aa).

It belongs to the poxviruses A23 family. As to quaternary structure, heterodimer of a 45 kDa and a 32 kDa subunit.

Functionally, acts with RNA polymerase to initiate transcription from intermediate gene promoters. The protein is Intermediate transcription factor 3 large subunit (VITF3L) of Oryctolagus cuniculus (Rabbit).